The primary structure comprises 347 residues: tRNA pseudouridine synthase D (347 aa).

Aspartate 81 functions as the Nucleophile in the catalytic mechanism. A TRUD domain is found at 158–304 (GVPNYFGNQR…MRHDRRAIAL (147 aa)).

The protein belongs to the pseudouridine synthase TruD family.

The catalysed reaction is uridine(13) in tRNA = pseudouridine(13) in tRNA. Responsible for synthesis of pseudouridine from uracil-13 in transfer RNAs. The chain is tRNA pseudouridine synthase D from Vibrio vulnificus (strain YJ016).